The chain runs to 120 residues: Large ribosomal subunit protein uL18 (120 aa).

This sequence belongs to the universal ribosomal protein uL18 family. Part of the 50S ribosomal subunit; part of the 5S rRNA/L5/L18/L25 subcomplex. Contacts the 5S and 23S rRNAs.

Functionally, this is one of the proteins that bind and probably mediate the attachment of the 5S RNA into the large ribosomal subunit, where it forms part of the central protuberance. This Rhizobium leguminosarum bv. trifolii (strain WSM2304) protein is Large ribosomal subunit protein uL18.